Here is a 185-residue protein sequence, read N- to C-terminus: Ribonuclease HII (185 aa).

Residues M1 to L185 form the RNase H type-2 domain. A divalent metal cation contacts are provided by D7, E8, and D99.

The protein belongs to the RNase HII family. Mn(2+) serves as cofactor. The cofactor is Mg(2+).

Its subcellular location is the cytoplasm. It carries out the reaction Endonucleolytic cleavage to 5'-phosphomonoester.. Functionally, endonuclease that specifically degrades the RNA of RNA-DNA hybrids. The polypeptide is Ribonuclease HII (Francisella tularensis subsp. novicida (strain U112)).